The following is a 339-amino-acid chain: Biotin synthase (339 aa).

The Radical SAM core domain occupies 55–282; it reads NAVQLSTLLS…KAVVRLSAGR (228 aa). Positions 70, 74, and 77 each coordinate [4Fe-4S] cluster. The [2Fe-2S] cluster site is built by Cys114, Cys145, Cys205, and Arg277.

This sequence belongs to the radical SAM superfamily. Biotin synthase family. As to quaternary structure, homodimer. The cofactor is [4Fe-4S] cluster. [2Fe-2S] cluster is required as a cofactor.

It carries out the reaction (4R,5S)-dethiobiotin + (sulfur carrier)-SH + 2 reduced [2Fe-2S]-[ferredoxin] + 2 S-adenosyl-L-methionine = (sulfur carrier)-H + biotin + 2 5'-deoxyadenosine + 2 L-methionine + 2 oxidized [2Fe-2S]-[ferredoxin]. It participates in cofactor biosynthesis; biotin biosynthesis; biotin from 7,8-diaminononanoate: step 2/2. Catalyzes the conversion of dethiobiotin (DTB) to biotin by the insertion of a sulfur atom into dethiobiotin via a radical-based mechanism. This Burkholderia vietnamiensis (strain G4 / LMG 22486) (Burkholderia cepacia (strain R1808)) protein is Biotin synthase.